Here is a 391-residue protein sequence, read N- to C-terminus: tRNA-specific 2-thiouridylase MnmA (391 aa).

Residues 20–27 (AMSGGVDS) and Leu-46 each bind ATP. Cys-114 functions as the Nucleophile in the catalytic mechanism. The cysteines at positions 114 and 210 are disulfide-linked. Residue Gly-138 coordinates ATP. The segment at 160–162 (RDQ) is interaction with tRNA. Cys-210 acts as the Cysteine persulfide intermediate in catalysis.

This sequence belongs to the MnmA/TRMU family.

The protein resides in the cytoplasm. It carries out the reaction S-sulfanyl-L-cysteinyl-[protein] + uridine(34) in tRNA + AH2 + ATP = 2-thiouridine(34) in tRNA + L-cysteinyl-[protein] + A + AMP + diphosphate + H(+). Its function is as follows. Catalyzes the 2-thiolation of uridine at the wobble position (U34) of tRNA, leading to the formation of s(2)U34. The polypeptide is tRNA-specific 2-thiouridylase MnmA (Bartonella bacilliformis (strain ATCC 35685 / KC583 / Herrer 020/F12,63)).